We begin with the raw amino-acid sequence, 164 residues long: FMN reductase (NADH) RutF (164 aa).

This sequence belongs to the non-flavoprotein flavin reductase family. RutF subfamily.

The enzyme catalyses FMNH2 + NAD(+) = FMN + NADH + 2 H(+). Functionally, catalyzes the reduction of FMN to FMNH2 which is used to reduce pyrimidine by RutA via the Rut pathway. This Escherichia coli O150:H5 (strain SE15) protein is FMN reductase (NADH) RutF.